We begin with the raw amino-acid sequence, 174 residues long: NADH-quinone oxidoreductase subunit I (174 aa).

4Fe-4S ferredoxin-type domains follow at residues 44-74 (LNRY…VEGD) and 90-119 (RVYQ…MTND). [4Fe-4S] cluster contacts are provided by cysteine 54, cysteine 57, cysteine 60, cysteine 64, cysteine 99, cysteine 102, cysteine 105, and cysteine 109.

Belongs to the complex I 23 kDa subunit family. As to quaternary structure, NDH-1 is composed of 14 different subunits. Subunits NuoA, H, J, K, L, M, N constitute the membrane sector of the complex. [4Fe-4S] cluster serves as cofactor.

The protein localises to the cell membrane. The enzyme catalyses a quinone + NADH + 5 H(+)(in) = a quinol + NAD(+) + 4 H(+)(out). NDH-1 shuttles electrons from NADH, via FMN and iron-sulfur (Fe-S) centers, to quinones in the respiratory chain. The immediate electron acceptor for the enzyme in this species is believed to be menaquinone. Couples the redox reaction to proton translocation (for every two electrons transferred, four hydrogen ions are translocated across the cytoplasmic membrane), and thus conserves the redox energy in a proton gradient. In Mycobacterium sp. (strain JLS), this protein is NADH-quinone oxidoreductase subunit I.